The chain runs to 141 residues: Hemoglobin subunit alpha (141 aa).

The 140-residue stretch at 2-141 (AFTACEKQTI…ICQELSSRYR (140 aa)) folds into the Globin domain. His59 is an O2 binding site. Position 88 (His88) interacts with heme b.

It belongs to the globin family. Heterotetramer of two alpha chains and two beta chains. Red blood cells.

In terms of biological role, involved in oxygen transport from gills to the various peripheral tissues. This is Hemoglobin subunit alpha (HBA) from Mustelus griseus (Spotless smooth-hound).